A 697-amino-acid chain; its full sequence is Elongation factor G (697 aa).

The 276-residue stretch at 10-285 folds into the tr-type G domain; sequence AKTRNIGIMA…GVIDYLPSPL (276 aa). Residues 19–26, 83–87, and 137–140 contribute to the GTP site; these read AHIDAGKT, DTPGH, and NKMD.

This sequence belongs to the TRAFAC class translation factor GTPase superfamily. Classic translation factor GTPase family. EF-G/EF-2 subfamily.

The protein localises to the cytoplasm. Functionally, catalyzes the GTP-dependent ribosomal translocation step during translation elongation. During this step, the ribosome changes from the pre-translocational (PRE) to the post-translocational (POST) state as the newly formed A-site-bound peptidyl-tRNA and P-site-bound deacylated tRNA move to the P and E sites, respectively. Catalyzes the coordinated movement of the two tRNA molecules, the mRNA and conformational changes in the ribosome. The chain is Elongation factor G from Lactobacillus acidophilus (strain ATCC 700396 / NCK56 / N2 / NCFM).